The chain runs to 148 residues: Arginine repressor (148 aa).

It belongs to the ArgR family.

It localises to the cytoplasm. Its pathway is amino-acid biosynthesis; L-arginine biosynthesis [regulation]. Its function is as follows. Regulates arginine biosynthesis genes. The chain is Arginine repressor from Chlorobium phaeovibrioides (strain DSM 265 / 1930) (Prosthecochloris vibrioformis (strain DSM 265)).